A 732-amino-acid chain; its full sequence is Sesterbrasiliatriene synthase PbSS (732 aa).

The tract at residues 1–342 (MDFLSGAFHY…SRYHRDDLIT (342 aa)) is terpene cyclase. Mg(2+)-binding residues include aspartate 105 and aspartate 109. Substrate contacts are provided by residues aspartate 105, aspartate 109, 193-196 (RLSE), 242-246 (FNKEF), and 334-335 (RY). A DDXXD 1 motif is present at residues 105–109 (DDVTD). The NSE/DTE signature appears at 238–246 (DYYSFNKEF). The prenyltransferase stretch occupies residues 343 to 732 (TAGDRAMIVG…ARILLLGLGL (390 aa)). Disordered regions lie at residues 371 to 390 (KSAT…WSDS) and 398 to 420 (ACYT…HKAN). Residues 411–420 (NGTEAGHKAN) are compositionally biased toward basic and acidic residues. 3 residues coordinate isopentenyl diphosphate: lysine 453, arginine 456, and histidine 485. Aspartate 492 and aspartate 496 together coordinate Mg(2+). The short motif at 492-496 (DDIED) is the DDXXD 2 element. Arginine 501 provides a ligand contact to dimethylallyl diphosphate. Isopentenyl diphosphate is bound at residue arginine 502. Residues lysine 579, threonine 580, glutamine 615, asparagine 622, lysine 632, and lysine 642 each coordinate dimethylallyl diphosphate.

In the N-terminal section; belongs to the terpene synthase family. This sequence in the C-terminal section; belongs to the FPP/GGPP synthase family. Hexamer. It depends on Mg(2+) as a cofactor.

The enzyme catalyses isopentenyl diphosphate + (2E,6E)-farnesyl diphosphate = (2E,6E,10E)-geranylgeranyl diphosphate + diphosphate. The catalysed reaction is isopentenyl diphosphate + (2E,6E,10E)-geranylgeranyl diphosphate = (2E,6E,10E,14E)-geranylfarnesyl diphosphate + diphosphate. The protein operates within secondary metabolite biosynthesis; terpenoid biosynthesis. In terms of biological role, bifunctional sesterterpene synthase that possesses both prenyl transferase and terpene cyclase activity, converting isopentenyl diphosphate and dimethylallyl diphosphate into geranylfarnesyl diphosphate (GFPP) and further converting GFPP into sesterbrasiliatriene. This is Sesterbrasiliatriene synthase PbSS (PbSS) from Penicillium brasilianum.